The primary structure comprises 198 residues: Recombination protein RecR (198 aa).

The C4-type zinc finger occupies 57–72 (CQRCNTFSEAELCAIC). The 96-residue stretch at 80–175 (DQLCIVEMPA…TVTRIARGMP (96 aa)) folds into the Toprim domain.

It belongs to the RecR family.

In terms of biological role, may play a role in DNA repair. It seems to be involved in an RecBC-independent recombinational process of DNA repair. It may act with RecF and RecO. The protein is Recombination protein RecR of Chromobacterium violaceum (strain ATCC 12472 / DSM 30191 / JCM 1249 / CCUG 213 / NBRC 12614 / NCIMB 9131 / NCTC 9757 / MK).